The primary structure comprises 146 residues: Large ribosomal subunit protein uL15 (146 aa).

The disordered stretch occupies residues 1–51 (MKLHELQPAPGSRKKAVRVGRGIGSGNGKTSGRGQKGQNARSGGGVRLGFE). 2 stretches are compositionally biased toward gly residues: residues 21-35 (RGIG…GRGQ) and 42-51 (SGGGVRLGFE).

Belongs to the universal ribosomal protein uL15 family. Part of the 50S ribosomal subunit.

In terms of biological role, binds to the 23S rRNA. The polypeptide is Large ribosomal subunit protein uL15 (Geobacillus kaustophilus (strain HTA426)).